The following is a 481-amino-acid chain: Phospho-2-dehydro-3-deoxyheptonate aldolase (481 aa).

Residues 1 to 22 (MSQQTTPNAPGWAPDSWRSKPI) are disordered.

This sequence belongs to the class-II DAHP synthase family. In terms of assembly, homodimer. The N-terminus is blocked.

It catalyses the reaction D-erythrose 4-phosphate + phosphoenolpyruvate + H2O = 7-phospho-2-dehydro-3-deoxy-D-arabino-heptonate + phosphate. It participates in metabolic intermediate biosynthesis; chorismate biosynthesis; chorismate from D-erythrose 4-phosphate and phosphoenolpyruvate: step 1/7. The chain is Phospho-2-dehydro-3-deoxyheptonate aldolase (aro-8) from Neurospora crassa (strain ATCC 24698 / 74-OR23-1A / CBS 708.71 / DSM 1257 / FGSC 987).